We begin with the raw amino-acid sequence, 416 residues long: Tyrosine--tRNA ligase (416 aa).

Y34 contacts L-tyrosine. The 'HIGH' region signature appears at 39-48 (PTGDSLHIGH). L-tyrosine contacts are provided by Y165 and Q169. A 'KMSKS' region motif is present at residues 227–231 (KFGKT). K230 serves as a coordination point for ATP. The region spanning 349-416 (KNIVEWLVDT…KKKYFLARVK (68 aa)) is the S4 RNA-binding domain.

The protein belongs to the class-I aminoacyl-tRNA synthetase family. TyrS type 1 subfamily. As to quaternary structure, homodimer.

The protein resides in the cytoplasm. The enzyme catalyses tRNA(Tyr) + L-tyrosine + ATP = L-tyrosyl-tRNA(Tyr) + AMP + diphosphate + H(+). Its function is as follows. Catalyzes the attachment of tyrosine to tRNA(Tyr) in a two-step reaction: tyrosine is first activated by ATP to form Tyr-AMP and then transferred to the acceptor end of tRNA(Tyr). The sequence is that of Tyrosine--tRNA ligase from Ligilactobacillus salivarius (strain UCC118) (Lactobacillus salivarius).